We begin with the raw amino-acid sequence, 162 residues long: Phosphopantetheine adenylyltransferase (162 aa).

Residue threonine 10 coordinates substrate. ATP-binding positions include 10–11 (TF) and histidine 18. Residues lysine 42, methionine 74, and arginine 88 each contribute to the substrate site. Residues 89–91 (GLR), glutamate 99, and 124–130 (YAFLSST) each bind ATP.

This sequence belongs to the bacterial CoaD family. Homohexamer. Requires Mg(2+) as cofactor.

It localises to the cytoplasm. The enzyme catalyses (R)-4'-phosphopantetheine + ATP + H(+) = 3'-dephospho-CoA + diphosphate. It functions in the pathway cofactor biosynthesis; coenzyme A biosynthesis; CoA from (R)-pantothenate: step 4/5. In terms of biological role, reversibly transfers an adenylyl group from ATP to 4'-phosphopantetheine, yielding dephospho-CoA (dPCoA) and pyrophosphate. The chain is Phosphopantetheine adenylyltransferase from Aliivibrio salmonicida (strain LFI1238) (Vibrio salmonicida (strain LFI1238)).